A 333-amino-acid chain; its full sequence is Starch-binding domain-containing protein 1 (333 aa).

Over 1–6 (MGAVWS) the chain is Extracellular. Residues 7–23 (ALLVGGGLAGALILWLL) traverse the membrane as a helical segment. The Cytoplasmic portion of the chain corresponds to 24-333 (RGDSGAPGKD…KVVHGWWGIH (310 aa)). Disordered regions lie at residues 31–73 (GKDG…ELVS) and 106–139 (NARE…RVGE). Positions 50 to 61 (PGGGPGGGGSGG) are enriched in gly residues. Serine 67 is modified (phosphoserine). The segment covering 124-134 (NSETSRNQSPE) has biased composition (polar residues). Phosphoserine occurs at positions 135 and 162. The LIR signature appears at 181–187 (HEDWEVV). Phosphoserine is present on residues serine 191, serine 192, serine 201, serine 205, serine 208, serine 216, and serine 219. In terms of domain architecture, CBM20 spans 233 to 332 (SVKPRQVSIQ…DKVVHGWWGI (100 aa)).

Interacts with the ATG8 family proteins GABARAP and GABARAPL1. Interacts with several glycogen-associated proteins, such as GYS2 (liver glycogen synthase), GDE (glycogen debranching enzyme), GBE1 (glycogen branching enzyme 1) and EPM2A (Laforin). Post-translationally, ubiquitinated, which leads to proteasomal degradation.

It is found in the preautophagosomal structure membrane. The protein resides in the endoplasmic reticulum membrane. The protein localises to the cell membrane. It localises to the sarcolemma. Its subcellular location is the T-tubule. Functionally, acts as a cargo receptor for glycogen. Delivers its cargo to an autophagic pathway called glycophagy, resulting in the transport of glycogen to lysosomes. The sequence is that of Starch-binding domain-containing protein 1 from Rattus norvegicus (Rat).